A 500-amino-acid chain; its full sequence is Cytosol aminopeptidase (500 aa).

Mn(2+)-binding residues include lysine 265 and aspartate 270. Lysine 277 is an active-site residue. Residues aspartate 288, aspartate 347, and glutamate 349 each coordinate Mn(2+). Residue arginine 351 is part of the active site.

The protein belongs to the peptidase M17 family. It depends on Mn(2+) as a cofactor.

It localises to the cytoplasm. It catalyses the reaction Release of an N-terminal amino acid, Xaa-|-Yaa-, in which Xaa is preferably Leu, but may be other amino acids including Pro although not Arg or Lys, and Yaa may be Pro. Amino acid amides and methyl esters are also readily hydrolyzed, but rates on arylamides are exceedingly low.. The enzyme catalyses Release of an N-terminal amino acid, preferentially leucine, but not glutamic or aspartic acids.. Its function is as follows. Presumably involved in the processing and regular turnover of intracellular proteins. Catalyzes the removal of unsubstituted N-terminal amino acids from various peptides. This chain is Cytosol aminopeptidase (pepA), found in Rickettsia prowazekii (strain Madrid E).